Consider the following 308-residue polypeptide: Growth/differentiation factor 15 (308 aa).

The first 29 residues, 1–29 (MPGQELRTVNGSQMLLVLLVLSWLPHGGA), serve as a signal peptide directing secretion. The propeptide occupies 30 to 194 (LSLAEASRAS…RPQAARGRRR (165 aa)). N-linked (GlcNAc...) asparagine glycosylation occurs at N70. The interval 152 to 177 (APALHLRLSPPPSQSDQLLAESSSAR) is disordered. Residues 165–177 (QSDQLLAESSSAR) show a composition bias toward polar residues. Disulfide bonds link C203–C210, C211–C274, C240–C305, and C244–C307.

It belongs to the TGF-beta family. Homodimer; disulfide-linked. Interacts with GFRAL and RET; ligand of GFRAL, which mediates GDF15 internalization and cellular signaling through interaction with RET via the formation of a 2:2:2 ternary complex composed of GDF15, GFRAL and RET. Detected in plasma (at protein level). Highly expressed in placenta, with lower levels in prostate and colon and some expression in kidney.

It is found in the secreted. Functionally, hormone produced in response to various stresses to confer information about those stresses to the brain, and trigger an aversive response, characterized by nausea, vomiting, and/or loss of appetite. The aversive response is both required to reduce continuing exposure to those stresses at the time of exposure and to promote avoidance behavior in the future. Acts by binding to its receptor, GFRAL, activating GFRAL-expressing neurons localized in the area postrema and nucleus tractus solitarius of the brainstem. It then triggers the activation of neurons localized within the parabrachial nucleus and central amygdala, which constitutes part of the 'emergency circuit' that shapes responses to stressful conditions. The GDF15-GFRAL signal induces expression of genes involved in metabolism, such as lipid metabolism in adipose tissues. Required for avoidance behavior in response to food allergens: induced downstream of mast cell activation to promote aversion and minimize harmful effects of exposure to noxious substances. In addition to suppress appetite, also promotes weight loss by enhancing energy expenditure in muscle: acts by increasing calcium futile cycling in muscle. Contributes to the effect of metformin, an anti-diabetic drug, on appetite reduction and weight loss: produced in the kidney in response to metformin treatment, thereby activating the GDF15-GFRAL response, leading to reduced appetite and weight. The contribution of GDF15 to weight loss following metformin treatment is however limited and subject to discussion. Produced in response to anticancer drugs, such as camptothecin or cisplatin, promoting nausea, vomiting and contributing to malnutrition. Overproduced in many cancers, promoting anorexia in cancer (cachexia). Responsible for the risk of nausea and vomiting during pregnancy: high levels of GDF15 during pregnancy, mostly originating from the fetus, are associated with increased nausea and vomiting. Maternal sensitivity to nausea is probably determined by pre-pregnancy exposure to GDF15, women with naturally high level of GDF15 being less susceptible to nausea than women with low levels of GDF15 before pregnancy. Promotes metabolic adaptation in response to systemic inflammation caused by bacterial and viral infections in order to promote tissue tolerance and prevent tissue damage. Required for tissue tolerance in response to myocardial infarction by acting as an inhibitor of leukocyte integring activation, thereby protecting against cardiac rupture. Inhibits growth hormone signaling on hepatocytes. In Homo sapiens (Human), this protein is Growth/differentiation factor 15.